The following is a 167-amino-acid chain: MGIEQKAGDMGIVTASLEQVVNWSRSNAMWPLLFGLACCAIEMMGAQGANYDLSRFGMEINRASPRQADLMIVAGRVSRKMAPVVRRLYDQMADPKWVIAMGDCAACGGVFNNYAIVQGVDEIVPVDVYVAGCPPRPEALIDGIIHLHEKVRRMRLDGTLREPVHLS.

Cys-38, Cys-39, Cys-104, and Cys-133 together coordinate [4Fe-4S] cluster.

The protein belongs to the complex I 20 kDa subunit family. As to quaternary structure, NDH-1 is composed of 14 different subunits. Subunits NuoB, C, D, E, F, and G constitute the peripheral sector of the complex. [4Fe-4S] cluster serves as cofactor.

The protein resides in the cell membrane. It catalyses the reaction a quinone + NADH + 5 H(+)(in) = a quinol + NAD(+) + 4 H(+)(out). In terms of biological role, NDH-1 shuttles electrons from NADH, via FMN and iron-sulfur (Fe-S) centers, to quinones in the respiratory chain. The immediate electron acceptor for the enzyme in this species is believed to be ubiquinone. Couples the redox reaction to proton translocation (for every two electrons transferred, four hydrogen ions are translocated across the cytoplasmic membrane), and thus conserves the redox energy in a proton gradient. The polypeptide is NADH-quinone oxidoreductase subunit B 1 (Roseiflexus castenholzii (strain DSM 13941 / HLO8)).